Reading from the N-terminus, the 234-residue chain is Large ribosomal subunit protein uL1 (234 aa).

This sequence belongs to the universal ribosomal protein uL1 family. Part of the 50S ribosomal subunit.

Its function is as follows. Binds directly to 23S rRNA. The L1 stalk is quite mobile in the ribosome, and is involved in E site tRNA release. Functionally, protein L1 is also a translational repressor protein, it controls the translation of the L11 operon by binding to its mRNA. In Bdellovibrio bacteriovorus (strain ATCC 15356 / DSM 50701 / NCIMB 9529 / HD100), this protein is Large ribosomal subunit protein uL1.